The following is a 32-amino-acid chain: uncharacterized protein (32 aa).

This is an uncharacterized protein from Mastigocladus laminosus (Fischerella sp.).